A 146-amino-acid chain; its full sequence is Replication and maintenance protein (146 aa).

The protein is Replication and maintenance protein (repL) of Bacillus subtilis.